A 335-amino-acid polypeptide reads, in one-letter code: Cell division protein ZipA (335 aa).

Over 1 to 4 (MDLN) the chain is Periplasmic. A helical membrane pass occupies residues 5 to 25 (AILIILGVIALIILVAHGIWS). Topologically, residues 26 to 335 (NRCEKSQYFE…AERDYLARVS (310 aa)) are cytoplasmic.

Belongs to the ZipA family. In terms of assembly, interacts with FtsZ via their C-terminal domains.

It is found in the cell inner membrane. Functionally, essential cell division protein that stabilizes the FtsZ protofilaments by cross-linking them and that serves as a cytoplasmic membrane anchor for the Z ring. Also required for the recruitment to the septal ring of downstream cell division proteins. The chain is Cell division protein ZipA from Histophilus somni (strain 129Pt) (Haemophilus somnus).